The following is a 327-amino-acid chain: Beta-ketoacyl-[acyl-carrier-protein] synthase III (327 aa).

Active-site residues include cysteine 112 and histidine 253. Residues 254–258 are ACP-binding; it reads QANER. Asparagine 283 is a catalytic residue.

It belongs to the thiolase-like superfamily. FabH family. As to quaternary structure, homodimer.

It is found in the cytoplasm. The enzyme catalyses malonyl-[ACP] + acetyl-CoA + H(+) = 3-oxobutanoyl-[ACP] + CO2 + CoA. It participates in lipid metabolism; fatty acid biosynthesis. Functionally, catalyzes the condensation reaction of fatty acid synthesis by the addition to an acyl acceptor of two carbons from malonyl-ACP. Catalyzes the first condensation reaction which initiates fatty acid synthesis and may therefore play a role in governing the total rate of fatty acid production. Possesses both acetoacetyl-ACP synthase and acetyl transacylase activities. Its substrate specificity determines the biosynthesis of branched-chain and/or straight-chain of fatty acids. This is Beta-ketoacyl-[acyl-carrier-protein] synthase III from Chlamydia muridarum (strain MoPn / Nigg).